A 473-amino-acid polypeptide reads, in one-letter code: uncharacterized protein (473 aa).

The signal sequence occupies residues 1–19; that stretch reads MIRAFLVFPYLYILVQSNG.

This is an uncharacterized protein from Methanocaldococcus jannaschii (strain ATCC 43067 / DSM 2661 / JAL-1 / JCM 10045 / NBRC 100440) (Methanococcus jannaschii).